Here is a 503-residue protein sequence, read N- to C-terminus: Glucose-6-phosphate 1-dehydrogenase (503 aa).

NADP(+)-binding positions include 14–21 (GASGDLSK), arginine 49, and lysine 158. D-glucose 6-phosphate is bound by residues lysine 158, 188-192 (HYLGK), glutamate 226, and aspartate 245. The Proton acceptor role is filled by histidine 250. Lysine 341 serves as a coordination point for NADP(+). Lysine 344 lines the D-glucose 6-phosphate pocket. Positions 350, 354, and 376 each coordinate NADP(+). A D-glucose 6-phosphate-binding site is contributed by glutamine 378. NADP(+) is bound by residues 384–386 (YLK), arginine 471, and tyrosine 487.

It belongs to the glucose-6-phosphate dehydrogenase family.

It carries out the reaction D-glucose 6-phosphate + NADP(+) = 6-phospho-D-glucono-1,5-lactone + NADPH + H(+). The protein operates within carbohydrate degradation; pentose phosphate pathway; D-ribulose 5-phosphate from D-glucose 6-phosphate (oxidative stage): step 1/3. Catalyzes the rate-limiting step of the oxidative pentose-phosphate pathway, which represents a route for the dissimilation of carbohydrates besides glycolysis. The main function of this enzyme is to provide reducing power (NADPH) and pentose phosphates for fatty acid and nucleic acid synthesis. The G6PDH activity is required to cope with hydrogen peroxide and potassium bisulfite stresses and plays a role in adaptation to conditions used in wine fermentations. This is Glucose-6-phosphate 1-dehydrogenase from Hanseniaspora uvarum (Yeast).